A 313-amino-acid polypeptide reads, in one-letter code: Protoheme IX farnesyltransferase (313 aa).

The next 8 helical transmembrane spans lie at 32–52 (VMSL…GDFH), 53–73 (PVLA…AGAL), 120–140 (ILVN…YVVI), 153–173 (IVIG…AVTG), 180–200 (LLLF…LALF), 226–246 (ILLY…LGYF), 248–268 (AIYG…ALRV), and 284–304 (LFKF…LEVV).

Belongs to the UbiA prenyltransferase family. Protoheme IX farnesyltransferase subfamily.

The protein resides in the cell inner membrane. The catalysed reaction is heme b + (2E,6E)-farnesyl diphosphate + H2O = Fe(II)-heme o + diphosphate. It participates in porphyrin-containing compound metabolism; heme O biosynthesis; heme O from protoheme: step 1/1. Functionally, converts heme B (protoheme IX) to heme O by substitution of the vinyl group on carbon 2 of heme B porphyrin ring with a hydroxyethyl farnesyl side group. The polypeptide is Protoheme IX farnesyltransferase (Rhodopseudomonas palustris (strain HaA2)).